The chain runs to 278 residues: Checkpoint protein Hus1-like (278 aa).

It belongs to the HUS1 family. In terms of assembly, component of the 9-1-1 checkpoint clamp complex consisting of Rad9 isoform A, Rad1 and Hus1-like; the interactions with Rad1 and Rad9 are direct. This complex probably also forms with Rad9 isoform B, however 9-1-1 complex containing Rad9 isoform A localizes to the nuclear periphery. Expressed in ovary.

It localises to the cytoplasm. The protein resides in the nucleus envelope. Functionally, component of the 9-1-1 checkpoint clamp complex. Involved in both meiotic and somatic DNA damage responses. Essential for activation of the meiotic checkpoint in response to double-strand DNA breaks; required for the S-phase checkpoint but not the G2-M phase checkpoint. Involved in double strand break repair by homologous recombination during meiosis; influences the organization of chromosomal DNA in the meiotic nucleus. The sequence is that of Checkpoint protein Hus1-like from Drosophila melanogaster (Fruit fly).